A 77-amino-acid chain; its full sequence is Acyl carrier protein (77 aa).

In terms of domain architecture, Carrier spans 1–76; the sequence is MADFEKVKSI…DVTKFIDNLK (76 aa). An O-(pantetheine 4'-phosphoryl)serine modification is found at serine 36.

Belongs to the acyl carrier protein (ACP) family. In terms of processing, 4'-phosphopantetheine is transferred from CoA to a specific serine of apo-ACP by AcpS. This modification is essential for activity because fatty acids are bound in thioester linkage to the sulfhydryl of the prosthetic group.

It is found in the cytoplasm. Its pathway is lipid metabolism; fatty acid biosynthesis. Carrier of the growing fatty acid chain in fatty acid biosynthesis. This Leptospira borgpetersenii serovar Hardjo-bovis (strain JB197) protein is Acyl carrier protein.